Reading from the N-terminus, the 749-residue chain is Chaperone protein dnaK3 (749 aa).

Phosphothreonine; by autocatalysis is present on Thr-198. Composition is skewed to basic and acidic residues over residues 643–653, 661–694, and 711–724; these read RWDADPWDRSR, YDDR…RDRN, and PTWE…RDRS. Residues 643-749 form a disordered region; it reads RWDADPWDRS…GWDDDDDEWF (107 aa). The segment covering 740–749 has biased composition (acidic residues); sequence GWDDDDDEWF.

It belongs to the heat shock protein 70 family.

In terms of biological role, acts as a chaperone. This Synechococcus elongatus (strain ATCC 33912 / PCC 7942 / FACHB-805) (Anacystis nidulans R2) protein is Chaperone protein dnaK3 (dnaK3).